The following is a 155-amino-acid chain: Troponin C, isoform 3 (155 aa).

EF-hand domains lie at 11–46, 47–82, 87–122, and 123–155; these read EQIAVLQKAFNSFDHQKTGSIPTEMVADILRLMGQP, FDKKILEELIEEVDEDKSGRLEFGEFVQLAAKFIVE, AMQKELREAFRLYDKQGNGFIPTTCLKEILKELDDQ, and LTEQELDIMIEEIDSDGSGTVDFDEFMEMMTGE. Ca(2+)-binding residues include Asp60, Asp62, Ser64, Arg66, and Glu71. Positions 136, 138, 140, 142, and 147 each coordinate Ca(2+).

Belongs to the troponin C family. In terms of tissue distribution, present in both larval and adult muscles.

The polypeptide is Troponin C, isoform 3 (TpnC73F) (Drosophila melanogaster (Fruit fly)).